We begin with the raw amino-acid sequence, 363 residues long: Probable butyrate kinase (363 aa).

This sequence belongs to the acetokinase family.

It is found in the cytoplasm. It carries out the reaction butanoate + ATP = butanoyl phosphate + ADP. The polypeptide is Probable butyrate kinase (Maridesulfovibrio salexigens (strain ATCC 14822 / DSM 2638 / NCIMB 8403 / VKM B-1763) (Desulfovibrio salexigens)).